Here is a 239-residue protein sequence, read N- to C-terminus: Pyridoxine 5'-phosphate synthase (239 aa).

Asn-7 provides a ligand contact to 3-amino-2-oxopropyl phosphate. Residue 9 to 10 (DH) participates in 1-deoxy-D-xylulose 5-phosphate binding. Residue Arg-18 coordinates 3-amino-2-oxopropyl phosphate. His-43 functions as the Proton acceptor in the catalytic mechanism. The 1-deoxy-D-xylulose 5-phosphate site is built by Arg-45 and His-50. The active-site Proton acceptor is the Glu-70. 1-deoxy-D-xylulose 5-phosphate is bound at residue Thr-100. Catalysis depends on His-191, which acts as the Proton donor. Residues Gly-192 and 213–214 (GH) contribute to the 3-amino-2-oxopropyl phosphate site.

The protein belongs to the PNP synthase family. As to quaternary structure, homooctamer; tetramer of dimers.

Its subcellular location is the cytoplasm. It catalyses the reaction 3-amino-2-oxopropyl phosphate + 1-deoxy-D-xylulose 5-phosphate = pyridoxine 5'-phosphate + phosphate + 2 H2O + H(+). The protein operates within cofactor biosynthesis; pyridoxine 5'-phosphate biosynthesis; pyridoxine 5'-phosphate from D-erythrose 4-phosphate: step 5/5. Its function is as follows. Catalyzes the complicated ring closure reaction between the two acyclic compounds 1-deoxy-D-xylulose-5-phosphate (DXP) and 3-amino-2-oxopropyl phosphate (1-amino-acetone-3-phosphate or AAP) to form pyridoxine 5'-phosphate (PNP) and inorganic phosphate. In Citrifermentans bemidjiense (strain ATCC BAA-1014 / DSM 16622 / JCM 12645 / Bem) (Geobacter bemidjiensis), this protein is Pyridoxine 5'-phosphate synthase.